A 250-amino-acid chain; its full sequence is Probable septum site-determining protein MinC (250 aa).

The tract at residues 110 to 143 (SGARERPLEPEPEVVKKPEPAPAPPPPPEPEVRP) is disordered. Basic and acidic residues predominate over residues 112–128 (ARERPLEPEPEVVKKPE). Positions 129–138 (PAPAPPPPPE) are enriched in pro residues.

Belongs to the MinC family. As to quaternary structure, interacts with MinD and FtsZ.

Cell division inhibitor that blocks the formation of polar Z ring septums. Rapidly oscillates between the poles of the cell to destabilize FtsZ filaments that have formed before they mature into polar Z rings. Prevents FtsZ polymerization. The protein is Probable septum site-determining protein MinC of Pseudomonas putida (strain ATCC 47054 / DSM 6125 / CFBP 8728 / NCIMB 11950 / KT2440).